Consider the following 344-residue polypeptide: tRNA N6-adenosine threonylcarbamoyltransferase (344 aa).

2 residues coordinate Fe cation: His-111 and His-115. Substrate is bound by residues 134 to 138 (LVSGG), Asp-167, Gly-180, and Asn-273. Asp-301 is a binding site for Fe cation.

The protein belongs to the KAE1 / TsaD family. Requires Fe(2+) as cofactor.

The protein localises to the cytoplasm. The enzyme catalyses L-threonylcarbamoyladenylate + adenosine(37) in tRNA = N(6)-L-threonylcarbamoyladenosine(37) in tRNA + AMP + H(+). Its function is as follows. Required for the formation of a threonylcarbamoyl group on adenosine at position 37 (t(6)A37) in tRNAs that read codons beginning with adenine. Is involved in the transfer of the threonylcarbamoyl moiety of threonylcarbamoyl-AMP (TC-AMP) to the N6 group of A37, together with TsaE and TsaB. TsaD likely plays a direct catalytic role in this reaction. The sequence is that of tRNA N6-adenosine threonylcarbamoyltransferase from Cupriavidus necator (strain ATCC 17699 / DSM 428 / KCTC 22496 / NCIMB 10442 / H16 / Stanier 337) (Ralstonia eutropha).